Reading from the N-terminus, the 343-residue chain is Anthranilate phosphoribosyltransferase (343 aa).

5-phospho-alpha-D-ribose 1-diphosphate contacts are provided by residues G84, 87 to 88 (GD), T92, 94 to 97 (NIST), 112 to 120 (KHGNRGVSS), and S124. G84 contacts anthranilate. S96 contacts Mg(2+). N115 provides a ligand contact to anthranilate. Residue R170 coordinates anthranilate. Mg(2+)-binding residues include D229 and E230.

Belongs to the anthranilate phosphoribosyltransferase family. In terms of assembly, homodimer. It depends on Mg(2+) as a cofactor.

The enzyme catalyses N-(5-phospho-beta-D-ribosyl)anthranilate + diphosphate = 5-phospho-alpha-D-ribose 1-diphosphate + anthranilate. Its pathway is amino-acid biosynthesis; L-tryptophan biosynthesis; L-tryptophan from chorismate: step 2/5. Its function is as follows. Catalyzes the transfer of the phosphoribosyl group of 5-phosphorylribose-1-pyrophosphate (PRPP) to anthranilate to yield N-(5'-phosphoribosyl)-anthranilate (PRA). This is Anthranilate phosphoribosyltransferase from Burkholderia pseudomallei (strain 1106a).